A 327-amino-acid polypeptide reads, in one-letter code: Glycerol-3-phosphate dehydrogenase [NAD(P)+] (327 aa).

3 residues coordinate NADPH: Phe-14, Arg-35, and Lys-108. Sn-glycerol 3-phosphate-binding residues include Lys-108 and Gly-136. Residue Ala-140 participates in NADPH binding. Lys-191, Asp-244, Ser-254, Arg-255, and Asn-256 together coordinate sn-glycerol 3-phosphate. Lys-191 (proton acceptor) is an active-site residue. Position 255 (Arg-255) interacts with NADPH. The NADPH site is built by Leu-275 and Glu-277.

This sequence belongs to the NAD-dependent glycerol-3-phosphate dehydrogenase family.

Its subcellular location is the cytoplasm. It carries out the reaction sn-glycerol 3-phosphate + NAD(+) = dihydroxyacetone phosphate + NADH + H(+). It catalyses the reaction sn-glycerol 3-phosphate + NADP(+) = dihydroxyacetone phosphate + NADPH + H(+). It participates in membrane lipid metabolism; glycerophospholipid metabolism. Its function is as follows. Catalyzes the reduction of the glycolytic intermediate dihydroxyacetone phosphate (DHAP) to sn-glycerol 3-phosphate (G3P), the key precursor for phospholipid synthesis. In Agrobacterium fabrum (strain C58 / ATCC 33970) (Agrobacterium tumefaciens (strain C58)), this protein is Glycerol-3-phosphate dehydrogenase [NAD(P)+].